The sequence spans 1367 residues: MARQMTSSQFHKSKTLDNKYMLGDEIGKGAYGRVYIGLDLENGDFVAIKQVSLENIGQEDLNTIMQEIDLLKNLNHKNIVKYLGSLKTKTHLHIILEYVENGSLANIIKPNKFGPFPESLVTVYIAQVLEGLVYLHEQGVIHRDIKGANILTTKEGLVKLADFGVATKLNEADFNTHSVVGTPYWMAPEVIELSGVCAASDIWSVGCTIIELLTCVPPYYDLQPMPALYRIVQDDTPPIPDSLSPDITDFLRLCFKKDSRQRPDAKTLLSHPWIRNSRRALRSSLRHSGTIRYMKETDSSSEKDAEGSQEVVESVSAEKVEVTKTNSKSKLPVIGGASFRSEKDQSSPSDLGEEGTDSEDDINSDQGPTLSMHDKSSRQSGTCSISSDAKGTSQDVLENHEKYDRDEIPGNLETEASEGRRNTLATKLVGKEYSIQSSHSFSQKGEDGLRKAVKTPSSFGGNELTRFSDPPGDASLHDLFHPLDKVPEGKTNEASTSTPTANVNQGDSPVADGGKNDLATKLRARIAQKQMEGETGHSQDGGDLFRLMMGVLKDDVLNIDDLVFDEKVPPENLFPLQAVEFSRLVSSLRPDESEDAIVTSSLKLVAMFRQRPGQKAVFVTQNGFLPLMDLLDIPKSRVICAVLQLINEIVKDNTDFLENACLVGLIPLVMSFAGFERDRSREIRKEAAYFLQQLCQSSPLTLQMFISCRGIPVLVGFLEADYAKHREMVHLAIDGMWQVFKLKKSTSRNDFCRIAAKNGILLRLVNTLYSLSEATRLASISGDALILDGQTPRARSGQLDPNNPIFSQRETSPSVIDHPDGLKTRNGGGEEPSHALTSNSQSSDVHQPDALHPDGDRPRLSSVVADATEDVIQQHRISLSANRTSTDKLQKLAEGASNGFPVTQPDQVRPLLSLLEKEPPSRKISGQLDYVKHIAGIERHESRLPLLYASDEKKTNGDLEFIMAEFAEVSGRGKENGNLDTAPRYSSKTMTKKVMAIERVASTCGIASQTASGVLSGSGVLNARPGSTTSSGLLAHALSADVSMDYLEKVADLLLEFARAETTVKSYMCSQSLLSRLFQMFNRVEPPILLKILECTNHLSTDPNCLENLQRADAIKQLIPNLELKEGPLVYQIHHEVLSALFNLCKINKRRQEQAAENGIIPHLMLFVMSDSPLKQYALPLLCDMAHASRNSREQLRAHGGLDVYLSLLDDEYWSVIALDSIAVCLAQDVDQKVEQAFLKKDAIQKLVNFFQNCPERHFVHILEPFLKIITKSSSINKTLALNGLTPLLIARLDHQDAIARLNLLKLIKAVYEKHPKPKQLIVENDLPQKLQNLIEERRDGQRSGGQVLVKQMATSLLKALHINTIL.

Residues 20–274 form the Protein kinase domain; it reads YMLGDEIGKG…AKTLLSHPWI (255 aa). 2 HEAT repeats span residues 25–62 and 86–125; these read EIGK…EDLN and LKTK…TVYI. Residues 26–34 and K49 contribute to the ATP site; that span reads IGKGAYGRV. The Proton acceptor role is filled by D144. Residues 218 to 256 form an HEAT 3 repeat; the sequence is PYYDLQPMPALYRIVQDDTPPIPDSLSPDITDFLRLCFK. Disordered stretches follow at residues 285–422 and 437–513; these read LRHS…GRRN and SSHS…VADG. The span at 293 to 306 shows a compositional bias: basic and acidic residues; the sequence is YMKETDSSSEKDAE. Residues 351–363 show a composition bias toward acidic residues; the sequence is LGEEGTDSEDDIN. The span at 378–396 shows a compositional bias: polar residues; the sequence is RQSGTCSISSDAKGTSQDV. Basic and acidic residues-rich tracts occupy residues 397–408 and 475–491; these read LENHEKYDRDEI and SLHD…EGKT. Positions 492–507 are enriched in polar residues; sequence NEASTSTPTANVNQGD. HEAT repeat units follow at residues 538–576, 577–614, 633–658, 659–700, and 704–742; these read SQDG…LFPL, QAVE…RPGQ, IPKS…DFLE, NACL…SSPL, and MFIS…VFKL. Residues 792–860 form a disordered region; that stretch reads PRARSGQLDP…LHPDGDRPRL (69 aa). Polar residues-rich tracts occupy residues 799–814 and 835–845; these read LDPN…TSPS and ALTSNSQSSDV. Positions 846 to 859 are enriched in basic and acidic residues; the sequence is HQPDALHPDGDRPR. HEAT repeat units follow at residues 850 to 888, 906 to 943, 1045 to 1066, 1067 to 1105, 1112 to 1150, 1154 to 1191, 1196 to 1236, 1257 to 1280, 1281 to 1317, and 1347 to 1367; these read ALHP…STDK, DQVR…HESR, DYLE…TVKS, YMCS…DPNC, ADAI…INKR, QAAE…ASRN, LRAH…KVEQ, RHFV…NKTL, ALNG…KHPK, and QVLV…NTIL.

The protein belongs to the protein kinase superfamily. Ser/Thr protein kinase family. Post-translationally, autophosphorylated. As to expression, expressed in both the sporophytic and the gametophytic tissues, especially in dividing cells. Mostly present in flower buds and mature flowers. Also accumulates in embryos and in roots.

It localises to the cytoplasm. The protein resides in the cytoskeleton. The protein localises to the microtubule organizing center. Its subcellular location is the nucleus. It is found in the nucleolus. It localises to the cell membrane. It carries out the reaction L-seryl-[protein] + ATP = O-phospho-L-seryl-[protein] + ADP + H(+). The catalysed reaction is L-threonyl-[protein] + ATP = O-phospho-L-threonyl-[protein] + ADP + H(+). Functionally, serine/threonine-protein kinase involved in the spatial and temporal control system organizing cortical activities in mitotic and postmitotic cells. Required for the normal functioning of the plasma membrane in developing pollen. Involved in the regulation of cell expansion and embryo development. The sequence is that of MAP3K epsilon protein kinase 2 from Arabidopsis thaliana (Mouse-ear cress).